An 88-amino-acid polypeptide reads, in one-letter code: Putative transmembrane protein ORF24 (88 aa).

The next 3 helical transmembrane spans lie at 16 to 36 (LNMG…WAGM), 42 to 62 (AVFV…VTQF), and 64 to 84 (FIWF…VASI).

The protein localises to the host membrane. This is Putative transmembrane protein ORF24 from Haloarcula hispanica (His1V).